We begin with the raw amino-acid sequence, 511 residues long: Light-independent protochlorophyllide reductase subunit B (511 aa).

Position 36 (aspartate 36) interacts with [4Fe-4S] cluster. The active-site Proton donor is the aspartate 299. A substrate-binding site is contributed by 434–435; the sequence is GM.

The protein belongs to the ChlB/BchB/BchZ family. As to quaternary structure, protochlorophyllide reductase is composed of three subunits; ChlL, ChlN and ChlB. Forms a heterotetramer of two ChlB and two ChlN subunits. Requires [4Fe-4S] cluster as cofactor.

It localises to the plastid. The protein localises to the chloroplast. It carries out the reaction chlorophyllide a + oxidized 2[4Fe-4S]-[ferredoxin] + 2 ADP + 2 phosphate = protochlorophyllide a + reduced 2[4Fe-4S]-[ferredoxin] + 2 ATP + 2 H2O. It functions in the pathway porphyrin-containing compound metabolism; chlorophyll biosynthesis (light-independent). Its function is as follows. Component of the dark-operative protochlorophyllide reductase (DPOR) that uses Mg-ATP and reduced ferredoxin to reduce ring D of protochlorophyllide (Pchlide) to form chlorophyllide a (Chlide). This reaction is light-independent. The NB-protein (ChlN-ChlB) is the catalytic component of the complex. The protein is Light-independent protochlorophyllide reductase subunit B of Huperzia lucidula (Shining clubmoss).